The following is a 4760-amino-acid chain: Nonribosomal peptide synthetase cm3A (4760 aa).

Residues 1 to 12 show a composition bias toward polar residues; the sequence is MKHLASSENMPT. The interval 1 to 24 is disordered; sequence MKHLASSENMPTPAQDRAPSPSAM. The 77-residue stretch at 19 to 95 folds into the Carrier 1 domain; the sequence is PSPSAMQQEI…ELSRSAECQL (77 aa). O-(pantetheine 4'-phosphoryl)serine is present on S56. 2 condensation regions span residues 142 to 570 and 178 to 571; these read QDIF…EIEQ and PGLS…IEQL. The adenylation 1 stretch occupies residues 591–984; sequence DEQARLCPDA…GRRDTQVKLR (394 aa). One can recognise a Carrier 2 domain in the interval 1120-1197; the sequence is REATTLQLQI…KLTEKLGVPE (78 aa). S1158 carries the post-translational modification O-(pantetheine 4'-phosphoryl)serine. 2 condensation regions span residues 1210–1654 and 1689–2125; these read FPLS…KTPS and VEDM…NVTT. Positions 2171–2551 are adenylation 2; the sequence is DGDLTYFELD…DRKDWQIKIR (381 aa). The Carrier 3 domain maps to 2684–2762; sequence LPSSETEKTV…ELAHAIDQRS (79 aa). Position 2721 is an O-(pantetheine 4'-phosphoryl)serine (S2721). The condensation 4 stretch occupies residues 2811–3203; that stretch reads VEDIYPCTPL…RFKHIFGQLS (393 aa). Residues 3255–3647 form an adenylation 3 region; the sequence is SATTPDRPAV…GRADQQLKIR (393 aa). Residues 3783 to 3857 enclose the Carrier 4 domain; the sequence is TRTEELMQSV…QLAQRATTDA (75 aa). Condensation stretches follow at residues 3869–4296 and 4340–4757; these read EFRL…TLLC and EDIY…EEMG.

This sequence belongs to the nrps family.

It functions in the pathway secondary metabolite biosynthesis. In terms of biological role, nonribosomal peptide synthetase; part of the gene cluster that mediates the biosynthesis of beauveriolides I and III, cyclodepsipeptides acting as inhibitors of the acyl-CoA:cholesterol acyltransferase. The HR-PKS cm3B initiates the biosynthesis of beauveriolides by iteratively catalyzing the formation of the linear polyketide chain. The ATP-dependent acetyl-CoA ligase cm3D converts the polyketide carboxylic acid to a CoA thioester which id shuttled to the first T domain in the NRPS cm3A by the acetyltransferase cm3C. Cm3A contains 13 domains and assembles the polyketide chain, L-phenylalanine, L-alanine, and D-leucine (or D-allo-isoleucine) to form beauveriolide I (or beauveriolide III). The production of both beauveriolides I and III suggests the substrate adaptability of cm3B, using different amino acids as substrates. This chain is Nonribosomal peptide synthetase cm3A, found in Cordyceps militaris (strain CM01) (Caterpillar fungus).